A 469-amino-acid polypeptide reads, in one-letter code: F-box only protein 3 (469 aa).

Positions 10-56 constitute an F-box domain; that stretch reads PLTLESLPTDPLLLILSFLDYRDLINCCYVSRRLSQLSSHDPLWRRH. The 131-residue stretch at 278–408 folds into the ApaG domain; the sequence is VATTGDITVS…FHMACPTFRV (131 aa). The segment covering 419–449 has biased composition (acidic residues); the sequence is EYEEMEEEEEEEEEEDDDDSADMDESDDDEE. The interval 419–454 is disordered; sequence EYEEMEEEEEEEEEEDDDDSADMDESDDDEEERQRR.

Part of a SCF (SKP1-cullin-F-box) protein ligase complex SCF(FBXO3) consisting of FBXO3, SKP1, CUL1 and RBX1. Interacts with PML, interaction is direct and takes place either alone or within the SCF complex.

It localises to the nucleus. The protein operates within protein modification; protein ubiquitination. Substrate recognition component of the SCF (SKP1-CUL1-F-box protein)-type E3 ubiquitin ligase complex, SCF(FBXO3), which mediates the ubiquitination and subsequent proteasomal degradation of target proteins. Mediates the ubiquitination of HIPK2 and probably that of EP300, leading to rapid degradation by the proteasome. In the presence of PML, HIPK2 ubiquitination still occurs, but degradation is prevented. PML, HIPK2 and FBXO3 may act synergically to activate p53/TP53-dependent transactivation. The SCF(FBXO3) also acts as a regulator of inflammation by mediating ubiquitination and degradation of FBXL2 in response to lipopolysaccharide (LPS). The SCF(FBXO3) complex specifically recognizes FBXL2 phosphorylated at 'Thr-404' and promotes its ubiquitination. This chain is F-box only protein 3 (FBXO3), found in Bos taurus (Bovine).